The sequence spans 232 residues: Ribose-5-phosphate isomerase A (232 aa).

Residues 28 to 31, 83 to 86, and 96 to 99 contribute to the substrate site; these read TGST, DGAD, and KGGG. The active-site Proton acceptor is the E105. K123 contributes to the substrate binding site.

This sequence belongs to the ribose 5-phosphate isomerase family. As to quaternary structure, homodimer.

The enzyme catalyses aldehydo-D-ribose 5-phosphate = D-ribulose 5-phosphate. Its pathway is carbohydrate degradation; pentose phosphate pathway; D-ribose 5-phosphate from D-ribulose 5-phosphate (non-oxidative stage): step 1/1. In terms of biological role, catalyzes the reversible conversion of ribose-5-phosphate to ribulose 5-phosphate. This chain is Ribose-5-phosphate isomerase A, found in Rhizobium etli (strain CIAT 652).